Here is a 417-residue protein sequence, read N- to C-terminus: Serine hydroxymethyltransferase (417 aa).

(6S)-5,6,7,8-tetrahydrofolate-binding positions include Leu116 and Gly120–Leu122. Lys225 bears the N6-(pyridoxal phosphate)lysine mark. Ser350–Phe352 serves as a coordination point for (6S)-5,6,7,8-tetrahydrofolate.

This sequence belongs to the SHMT family. Homodimer. Requires pyridoxal 5'-phosphate as cofactor.

It localises to the cytoplasm. It carries out the reaction (6R)-5,10-methylene-5,6,7,8-tetrahydrofolate + glycine + H2O = (6S)-5,6,7,8-tetrahydrofolate + L-serine. The protein operates within one-carbon metabolism; tetrahydrofolate interconversion. It participates in amino-acid biosynthesis; glycine biosynthesis; glycine from L-serine: step 1/1. Catalyzes the reversible interconversion of serine and glycine with tetrahydrofolate (THF) serving as the one-carbon carrier. This reaction serves as the major source of one-carbon groups required for the biosynthesis of purines, thymidylate, methionine, and other important biomolecules. Also exhibits THF-independent aldolase activity toward beta-hydroxyamino acids, producing glycine and aldehydes, via a retro-aldol mechanism. The protein is Serine hydroxymethyltransferase of Ligilactobacillus salivarius (strain UCC118) (Lactobacillus salivarius).